We begin with the raw amino-acid sequence, 224 residues long: DNA repair and recombination protein RadB (224 aa).

This sequence belongs to the eukaryotic RecA-like protein family. RadB subfamily.

Involved in DNA repair and in homologous recombination. May regulate the cleavage reactions of the branch-structured DNA. Has a very weak ATPase activity that is not stimulated by DNA. Binds DNA but does not promote DNA strands exchange. In Methanoculleus marisnigri (strain ATCC 35101 / DSM 1498 / JR1), this protein is DNA repair and recombination protein RadB.